The sequence spans 276 residues: Probable transposase for insertion sequence element IS702 (276 aa).

The region spanning 118–256 is the DDE Tnp4 domain; sequence MDVTESPIER…SNQYRNRHRR (139 aa). Asp119, Asp170, Asp190, and Glu234 together coordinate a divalent metal cation.

Belongs to the transposase 11 family. It depends on a divalent metal cation as a cofactor.

In terms of biological role, involved in the transposition of the insertion sequence. This Microchaete diplosiphon (Fremyella diplosiphon) protein is Probable transposase for insertion sequence element IS702.